The chain runs to 291 residues: Pirin-like protein (291 aa).

It belongs to the pirin family.

The protein resides in the nucleus. The polypeptide is Pirin-like protein (Solanum lycopersicum (Tomato)).